The following is a 657-amino-acid chain: Hemocyanin (657 aa).

Asn-167 is a glycosylation site (N-linked (GlcNAc...) asparagine). Cu cation-binding residues include His-194, His-198, His-224, His-344, His-348, and His-384. Cystine bridges form between Cys-483-Cys-502 and Cys-562-Cys-609.

Belongs to the tyrosinase family. Hemocyanin subfamily. It consists of at least four very similar subunits. Hemolymph.

It is found in the secreted. Its subcellular location is the extracellular space. Hemocyanins are copper-containing oxygen carriers occurring freely dissolved in the hemolymph of many mollusks and arthropods. This is Hemocyanin from Palinurus vulgaris (European spiny lobster).